A 388-amino-acid polypeptide reads, in one-letter code: Chorismate synthase (388 aa).

Positions 39 and 45 each coordinate NADP(+). FMN contacts are provided by residues Arg-130–Ser-132, Asn-251–Ala-252, Ala-296, Lys-311–Thr-315, and Arg-337.

Belongs to the chorismate synthase family. As to quaternary structure, homotetramer. It depends on FMNH2 as a cofactor.

The enzyme catalyses 5-O-(1-carboxyvinyl)-3-phosphoshikimate = chorismate + phosphate. Its pathway is metabolic intermediate biosynthesis; chorismate biosynthesis; chorismate from D-erythrose 4-phosphate and phosphoenolpyruvate: step 7/7. In terms of biological role, catalyzes the anti-1,4-elimination of the C-3 phosphate and the C-6 proR hydrogen from 5-enolpyruvylshikimate-3-phosphate (EPSP) to yield chorismate, which is the branch point compound that serves as the starting substrate for the three terminal pathways of aromatic amino acid biosynthesis. This reaction introduces a second double bond into the aromatic ring system. This Streptococcus equi subsp. zooepidemicus (strain MGCS10565) protein is Chorismate synthase.